The chain runs to 66 residues: Period circadian protein (66 aa).

A disordered region spans residues 1–66 (EGSGGSGSSG…VTLTESLLNK (66 aa)). Over residues 9-31 (SGNFTTGSNIHMSSVTNTSNAGT) the composition is skewed to low complexity. Repeat copies occupy residues 30–31 (GT), 32–33 (GT), 35–36 (GT), and 37–38 (GN). Positions 30–53 (GTGTSGTGNSGGGSGGGTGPGSGA) are 4 X 2 AA tandem repeats of G-[TN]. Residues 32 to 51 (GTSGTGNSGGGSGGGTGPGS) are compositionally biased toward gly residues.

As to quaternary structure, forms a heterodimer with timeless (TIM); the complex then translocates into the nucleus. In terms of processing, phosphorylated with a circadian rhythmicity, probably by the double-time protein (dbt). Phosphorylation could be implicated in the stability of per monomer and in the formation of heterodimer per-tim.

The protein localises to the nucleus. It localises to the cytoplasm. Its subcellular location is the perinuclear region. Essential for biological clock functions. Determines the period length of circadian and ultradian rhythms; an increase in PER dosage leads to shortened circadian rhythms and a decrease leads to lengthened circadian rhythms. Essential for the circadian rhythmicity of locomotor activity, eclosion behavior, and for the rhythmic component of the male courtship song that originates in the thoracic nervous system. The biological cycle depends on the rhythmic formation and nuclear localization of the TIM-PER complex. Light induces the degradation of TIM, which promotes elimination of PER. Nuclear activity of the heterodimer coordinatively regulates PER and TIM transcription through a negative feedback loop. Behaves as a negative element in circadian transcriptional loop. Does not appear to bind DNA, suggesting indirect transcriptional inhibition. This chain is Period circadian protein (per), found in Drosophila saltans (Fruit fly).